The primary structure comprises 152 residues: Transcriptional regulator MraZ (152 aa).

SpoVT-AbrB domains lie at 5–52 (VTSI…PLHE) and 81–124 (ATEC…QDKQ).

The protein belongs to the MraZ family. In terms of assembly, forms oligomers.

Its subcellular location is the cytoplasm. It localises to the nucleoid. The chain is Transcriptional regulator MraZ from Actinobacillus pleuropneumoniae serotype 3 (strain JL03).